We begin with the raw amino-acid sequence, 172 residues long: Endoribonuclease YbeY (172 aa).

The tract at residues M1–R21 is disordered. Positions A10 to R21 are enriched in basic and acidic residues. Residues H134, H138, and H144 each contribute to the Zn(2+) site.

The protein belongs to the endoribonuclease YbeY family. The cofactor is Zn(2+).

Its subcellular location is the cytoplasm. Single strand-specific metallo-endoribonuclease involved in late-stage 70S ribosome quality control and in maturation of the 3' terminus of the 16S rRNA. In Burkholderia lata (strain ATCC 17760 / DSM 23089 / LMG 22485 / NCIMB 9086 / R18194 / 383), this protein is Endoribonuclease YbeY.